We begin with the raw amino-acid sequence, 51 residues long: Large ribosomal subunit protein bL33 (51 aa).

Residues 1–23 are disordered; it reads MRDKIKLESSAGTGHFYTTTKNK. The segment covering 10 to 20 has biased composition (polar residues); that stretch reads SAGTGHFYTTT.

The protein belongs to the bacterial ribosomal protein bL33 family.

This is Large ribosomal subunit protein bL33 from Chromobacterium violaceum (strain ATCC 12472 / DSM 30191 / JCM 1249 / CCUG 213 / NBRC 12614 / NCIMB 9131 / NCTC 9757 / MK).